We begin with the raw amino-acid sequence, 895 residues long: ABC-transporter-regulating transcription factor (895 aa).

A DNA-binding region (zn(2)-C6 fungal-type) is located at residues 69-96 (CDMCRKKKIKCDGKMPKCSHCTNYKTDC). The segment at 156 to 218 (HASGSNTPHN…QKESETEVEG (63 aa)) is disordered. Polar residues predominate over residues 158–207 (SGSNTPHNPQKINIPSQSQIAMSQQNSSSHYSTPRLESQSSPRTAATSPE). A helical membrane pass occupies residues 648-668 (CVWLILYYPVSALVTLFANIL). The interval 726 to 813 (ESYSKKKRKS…TGVSTNIPPN (88 aa)) is disordered. The span at 755–765 (PSTTQPTQAPS) shows a compositional bias: low complexity.

Interacts with ncaA.

The protein localises to the nucleus. It is found in the membrane. In terms of biological role, transcription factor that regulates expression of the genes related to ergosterol biosynthesis, including erg3B, erg24A, erg25A, as well as cyp51A that encodes a target protein of azoles. In coordination with ffmA and ncaA, is responsible for the expression of the ABC transporter abcC/cdr1B/abcG1 related to azole resistance. Directly binds both the cyp51A and abcC/cdr1B/abcG1 promoters at a conserved 34 bp region called the atrR response element (ATRE). AtrR also binds to the promoter regions of both the sterol response transcription factor srbA and atrR genes themselves, the latter suggesting the possibility that atrR is autoregulated. Also regulates iron uptake, most likely via cooperation with SrbA. AtrR is necessary for hypoxia adaptation and virulence. The sequence is that of ABC-transporter-regulating transcription factor from Aspergillus fumigatus (strain ATCC MYA-4609 / CBS 101355 / FGSC A1100 / Af293) (Neosartorya fumigata).